The primary structure comprises 38 residues: Large ribosomal subunit protein bL36A (38 aa).

Belongs to the bacterial ribosomal protein bL36 family.

In Pseudomonas aeruginosa (strain UCBPP-PA14), this protein is Large ribosomal subunit protein bL36A.